A 76-amino-acid chain; its full sequence is Putative membrane protein insertion efficiency factor (76 aa).

It belongs to the UPF0161 family.

The protein localises to the cell inner membrane. Functionally, could be involved in insertion of integral membrane proteins into the membrane. This chain is Putative membrane protein insertion efficiency factor, found in Porphyromonas gingivalis (strain ATCC 33277 / DSM 20709 / CIP 103683 / JCM 12257 / NCTC 11834 / 2561).